The primary structure comprises 168 residues: MASIAAKSVSLRAATRRAAPVAAPADARFKVWQPVNNKQYETFSYLPPLTNQKIGRQVDYIINNGWTPCLEFADPSTSFVSNANAVRLQGVSAGYYDNRYWTMWKLPMFGCTDPSQVLREVSACQVAFPNVYIRLVAFDNVKQVQCMGFLVQRPRNAAEYCPLEKRSV.

A chloroplast-targeting transit peptide spans Met1–Arg28.

It belongs to the RuBisCO small chain family. As to quaternary structure, heterohexadecamer of 8 large and 8 small subunits.

The protein localises to the plastid. The protein resides in the chloroplast. Its function is as follows. RuBisCO catalyzes two reactions: the carboxylation of D-ribulose 1,5-bisphosphate, the primary event in carbon dioxide fixation, as well as the oxidative fragmentation of the pentose substrate. Both reactions occur simultaneously and in competition at the same active site. Although the small subunit is not catalytic it is essential for maximal activity. This is Ribulose bisphosphate carboxylase small subunit, chloroplastic from Chlamydomonas moewusii (Chlamydomonas eugametos).